The sequence spans 404 residues: Cysteine desulfurase IscS (404 aa).

Pyridoxal 5'-phosphate contacts are provided by residues 75–76 (AT), asparagine 155, glutamine 183, and 203–205 (SGH). Lysine 206 bears the N6-(pyridoxal phosphate)lysine mark. Threonine 243 provides a ligand contact to pyridoxal 5'-phosphate. The active-site Cysteine persulfide intermediate is the cysteine 328. Position 328 (cysteine 328) interacts with [2Fe-2S] cluster.

This sequence belongs to the class-V pyridoxal-phosphate-dependent aminotransferase family. NifS/IscS subfamily. As to quaternary structure, homodimer. Forms a heterotetramer with IscU, interacts with other sulfur acceptors. Pyridoxal 5'-phosphate serves as cofactor.

The protein resides in the cytoplasm. It catalyses the reaction (sulfur carrier)-H + L-cysteine = (sulfur carrier)-SH + L-alanine. It participates in cofactor biosynthesis; iron-sulfur cluster biosynthesis. In terms of biological role, master enzyme that delivers sulfur to a number of partners involved in Fe-S cluster assembly, tRNA modification or cofactor biosynthesis. Catalyzes the removal of elemental sulfur atoms from cysteine to produce alanine. Functions as a sulfur delivery protein for Fe-S cluster synthesis onto IscU, an Fe-S scaffold assembly protein, as well as other S acceptor proteins. The protein is Cysteine desulfurase IscS of Shewanella amazonensis (strain ATCC BAA-1098 / SB2B).